The sequence spans 228 residues: Indole-3-glycerol phosphate synthase (228 aa).

This sequence belongs to the TrpC family.

The enzyme catalyses 1-(2-carboxyphenylamino)-1-deoxy-D-ribulose 5-phosphate + H(+) = (1S,2R)-1-C-(indol-3-yl)glycerol 3-phosphate + CO2 + H2O. It functions in the pathway amino-acid biosynthesis; L-tryptophan biosynthesis; L-tryptophan from chorismate: step 4/5. The polypeptide is Indole-3-glycerol phosphate synthase (Pyrococcus furiosus (strain ATCC 43587 / DSM 3638 / JCM 8422 / Vc1)).